The sequence spans 156 residues: Large ribosomal subunit protein uL23 (156 aa).

A compositionally biased stretch (basic and acidic residues) spans 1–19 (MAPKAKKEAPAPPKAEAKA). The disordered stretch occupies residues 1–67 (MAPKAKKEAP…PKYPRKSAPR (67 aa)). A N,N,N-trimethylalanine modification is found at Ala2. A Glycyl lysine isopeptide (Lys-Gly) (interchain with G-Cter in SUMO2) cross-link involves residue Lys14. A compositionally biased stretch (basic residues) spans 20–67 (KALKAKKAVLKGVHSHKKKKIRTSPTFRRPKTLRLRRQPKYPRKSAPR). Residues 32–74 (VHSHKKKKIRTSPTFRRPKTLRLRRQPKYPRKSAPRRNKLDHY) are beta-like import receptor binding (BIB) domain. Arg41 bears the Citrulline mark. Residue Ser43 is modified to Phosphoserine. At Thr45 the chain carries Phosphothreonine. Lys70 is modified (N6-acetyllysine).

It belongs to the universal ribosomal protein uL23 family. In terms of assembly, component of the large ribosomal subunit. Interacts with LYAR and GNL2. Interacts with MDM2; this interaction may promote MDM2-mediated p53/TP53 polyubiquitination. Directly interacts (via BIB domain) with IPO5, IPO7, KPNB1 and TNPO1; these interactions are involved in RPL23A nuclear import for the assembly of ribosomal subunits. Interacts with IPO8. In terms of processing, N-terminus is methylated by METTL11A/NTM1. Citrullinated by PADI4.

The protein localises to the cytoplasm. Its subcellular location is the nucleus. In terms of biological role, component of the large ribosomal subunit. The ribosome is a large ribonucleoprotein complex responsible for the synthesis of proteins in the cell. Binds a specific region on the 26S rRNA. May promote p53/TP53 degradation possibly through the stimulation of MDM2-mediated TP53 polyubiquitination. The sequence is that of Large ribosomal subunit protein uL23 (RPL23A) from Bos taurus (Bovine).